A 240-amino-acid polypeptide reads, in one-letter code: UDP-2,3-diacylglucosamine hydrolase (240 aa).

Residues Asp-8, His-10, Asp-41, Asn-79, and His-114 each coordinate Mn(2+). Asn-79–Arg-80 serves as a coordination point for substrate. 5 residues coordinate substrate: Asp-122, Ser-160, Asn-164, Lys-167, and His-195. Positions 195 and 197 each coordinate Mn(2+).

It belongs to the LpxH family. The cofactor is Mn(2+).

The protein resides in the cell inner membrane. It carries out the reaction UDP-2-N,3-O-bis[(3R)-3-hydroxytetradecanoyl]-alpha-D-glucosamine + H2O = 2-N,3-O-bis[(3R)-3-hydroxytetradecanoyl]-alpha-D-glucosaminyl 1-phosphate + UMP + 2 H(+). It participates in glycolipid biosynthesis; lipid IV(A) biosynthesis; lipid IV(A) from (3R)-3-hydroxytetradecanoyl-[acyl-carrier-protein] and UDP-N-acetyl-alpha-D-glucosamine: step 4/6. Its function is as follows. Hydrolyzes the pyrophosphate bond of UDP-2,3-diacylglucosamine to yield 2,3-diacylglucosamine 1-phosphate (lipid X) and UMP by catalyzing the attack of water at the alpha-P atom. Involved in the biosynthesis of lipid A, a phosphorylated glycolipid that anchors the lipopolysaccharide to the outer membrane of the cell. The sequence is that of UDP-2,3-diacylglucosamine hydrolase from Yersinia pestis bv. Antiqua (strain Angola).